The sequence spans 396 residues: 1-deoxy-D-xylulose 5-phosphate reductoisomerase (396 aa).

Residues Thr-15, Gly-16, Ser-17, Ile-18, Gly-41, and Asn-129 each coordinate NADPH. Lys-130 lines the 1-deoxy-D-xylulose 5-phosphate pocket. Glu-131 contributes to the NADPH binding site. Mn(2+) is bound at residue Asp-155. 4 residues coordinate 1-deoxy-D-xylulose 5-phosphate: Ser-156, Glu-157, Ser-182, and His-205. Glu-157 serves as a coordination point for Mn(2+). Gly-211 is a binding site for NADPH. Residues Ser-218, Asn-223, Lys-224, and Glu-227 each coordinate 1-deoxy-D-xylulose 5-phosphate. A Mn(2+)-binding site is contributed by Glu-227.

It belongs to the DXR family. Requires Mg(2+) as cofactor. Mn(2+) is required as a cofactor.

It carries out the reaction 2-C-methyl-D-erythritol 4-phosphate + NADP(+) = 1-deoxy-D-xylulose 5-phosphate + NADPH + H(+). The protein operates within isoprenoid biosynthesis; isopentenyl diphosphate biosynthesis via DXP pathway; isopentenyl diphosphate from 1-deoxy-D-xylulose 5-phosphate: step 1/6. Functionally, catalyzes the NADPH-dependent rearrangement and reduction of 1-deoxy-D-xylulose-5-phosphate (DXP) to 2-C-methyl-D-erythritol 4-phosphate (MEP). This is 1-deoxy-D-xylulose 5-phosphate reductoisomerase from Xanthomonas oryzae pv. oryzae (strain MAFF 311018).